We begin with the raw amino-acid sequence, 239 residues long: Major centromere autoantigen B (239 aa).

The interval 28–185 (AGFGGGPNAT…DDEVPVPSFG (158 aa)) is disordered. Phosphothreonine is present on residues Thr37 and Thr39. 2 stretches are compositionally biased toward acidic residues: residues 46–117 (GEEE…EAED) and 148–179 (GEEDSESDSEEEEEDDDEDEDDEDDEEEDDEV). Residues 176 to 239 (DDEVPVPSFG…AGARGLGHQS (64 aa)) form a homodimerization region.

Antiparallel homodimer. Interacts with CENPT. Identified in a centromere complex containing histones H2A, H2B and H4, and at least CENPA, CENPB, CENPC, CENPT, CENPN, HJURP, SUPT16H, SSRP1 and RSF1. Poly-ADP-ribosylated by PARP1. Post-translationally, N-terminally methylated by METTL11A/NTM1. Alpha-N-methylation is stimulated in response extracellular stimuli, including increased cell density and heat shock, and seems to facilitate binding to CENP-B boxes. Chromatin-bound CENP-B is primarily trimethylated.

The protein resides in the nucleus. It localises to the chromosome. Its subcellular location is the centromere. Interacts with centromeric heterochromatin in chromosomes and binds to a specific 17 bp subset of alphoid satellite DNA, called the CENP-B box. May organize arrays of centromere satellite DNA into a higher-order structure which then directs centromere formation and kinetochore assembly in mammalian chromosomes. The chain is Major centromere autoantigen B (CENPB) from Ovis aries (Sheep).